The primary structure comprises 354 residues: Selenide, water dikinase (354 aa).

Residue C23 is part of the active site. Residues K26 and 54–56 each bind ATP; that span reads TAD. D57 is a Mg(2+) binding site. Residues D74, D97, and 145 to 147 each bind ATP; that span reads GHS. Position 97 (D97) interacts with Mg(2+). D233 contacts Mg(2+).

Belongs to the selenophosphate synthase 1 family. Class I subfamily. In terms of assembly, homodimer. The cofactor is Mg(2+).

The enzyme catalyses hydrogenselenide + ATP + H2O = selenophosphate + AMP + phosphate + 2 H(+). In terms of biological role, synthesizes selenophosphate from selenide and ATP. The sequence is that of Selenide, water dikinase from Paraburkholderia xenovorans (strain LB400).